The following is a 553-amino-acid chain: Putative transport protein YidE (553 aa).

5 consecutive transmembrane segments (helical) span residues 4–24 (IALTVSVLALVAVVGLWIGNI), 28–48 (GVGFGIGGVLFGGIIVGHFVD), 65–85 (FGLILFVYTIGIQVGPGFFAS), 95–115 (LFAVLIVIMGGLVTAILHKIF), and 158–178 (MSYAMAYPFGICGILLTMWLM). RCK C-terminal domains follow at residues 192 to 276 (KHES…VIGK) and 279 to 361 (DTSL…VVGN). The next 6 helical transmembrane spans lie at 371–391 (MLPVFIGIGLGVLLGSIPLFV), 393–413 (GFPVALKLGLAGGPLIMALIL), 437–457 (LGIVLFLAVVGLKSGGDFVDT), 464–484 (LSWIGYGIFITAIPLITIGLL), 493–513 (YLTLCGMLAGSMTDPPALAFA), and 533–553 (LVMFLRIITPQLLAVIFWGMG).

The protein belongs to the AAE transporter (TC 2.A.81) family. YidE subfamily.

Its subcellular location is the cell membrane. This Salmonella paratyphi C (strain RKS4594) protein is Putative transport protein YidE.